A 231-amino-acid chain; its full sequence is Putative N-acetylmannosamine-6-phosphate 2-epimerase (231 aa).

It belongs to the NanE family.

The catalysed reaction is an N-acyl-D-glucosamine 6-phosphate = an N-acyl-D-mannosamine 6-phosphate. It functions in the pathway amino-sugar metabolism; N-acetylneuraminate degradation; D-fructose 6-phosphate from N-acetylneuraminate: step 3/5. In terms of biological role, converts N-acetylmannosamine-6-phosphate (ManNAc-6-P) to N-acetylglucosamine-6-phosphate (GlcNAc-6-P). This chain is Putative N-acetylmannosamine-6-phosphate 2-epimerase, found in Latilactobacillus sakei subsp. sakei (strain 23K) (Lactobacillus sakei subsp. sakei).